The following is an 881-amino-acid chain: Probable intermembrane transport protein HI_1672 (881 aa).

Residues 30–49 (FWLLPFIALCIGAILFFQIV) form a helical membrane-spanning segment.

Belongs to the PqiB family.

Its subcellular location is the cell inner membrane. The protein is Probable intermembrane transport protein HI_1672 of Haemophilus influenzae (strain ATCC 51907 / DSM 11121 / KW20 / Rd).